We begin with the raw amino-acid sequence, 390 residues long: Acetylornithine aminotransferase (390 aa).

Residues 103-104 (GT) and Phe129 each bind pyridoxal 5'-phosphate. Arg132 lines the N(2)-acetyl-L-ornithine pocket. 214-217 (DEVQ) contributes to the pyridoxal 5'-phosphate binding site. N6-(pyridoxal phosphate)lysine is present on Lys243. Ser271 contributes to the N(2)-acetyl-L-ornithine binding site. Thr272 is a pyridoxal 5'-phosphate binding site. Lys304 participates in a covalent cross-link: Isoglutamyl lysine isopeptide (Lys-Gln) (interchain with Q-Cter in protein Pup).

It belongs to the class-III pyridoxal-phosphate-dependent aminotransferase family. ArgD subfamily. In terms of assembly, homodimer. Pyridoxal 5'-phosphate is required as a cofactor.

Its subcellular location is the cytoplasm. The catalysed reaction is N(2)-acetyl-L-ornithine + 2-oxoglutarate = N-acetyl-L-glutamate 5-semialdehyde + L-glutamate. It functions in the pathway amino-acid biosynthesis; L-arginine biosynthesis; N(2)-acetyl-L-ornithine from L-glutamate: step 4/4. The polypeptide is Acetylornithine aminotransferase (Mycolicibacterium smegmatis (strain ATCC 700084 / mc(2)155) (Mycobacterium smegmatis)).